A 400-amino-acid chain; its full sequence is Homoserine O-acetyltransferase (400 aa).

Residues 1-11 show a composition bias toward polar residues; sequence MVKVQSIQSQA. The segment at 1–24 is disordered; the sequence is MVKVQSIQSQAVHAEERAHEADHP. The span at 13–23 shows a compositional bias: basic and acidic residues; that stretch reads HAEERAHEADH. Positions 64–373 constitute an AB hydrolase-1 domain; the sequence is NAILVCHALT…TDRGHDAFLL (310 aa). Residue serine 169 is the Nucleophile of the active site. Arginine 239 provides a ligand contact to substrate. Active-site residues include aspartate 335 and histidine 368. Aspartate 369 provides a ligand contact to substrate.

It belongs to the AB hydrolase superfamily. MetX family. In terms of assembly, homodimer.

The protein resides in the cytoplasm. It catalyses the reaction L-homoserine + acetyl-CoA = O-acetyl-L-homoserine + CoA. The protein operates within amino-acid biosynthesis; L-methionine biosynthesis via de novo pathway; O-acetyl-L-homoserine from L-homoserine: step 1/1. In terms of biological role, transfers an acetyl group from acetyl-CoA to L-homoserine, forming acetyl-L-homoserine. The polypeptide is Homoserine O-acetyltransferase (Rhodopseudomonas palustris (strain BisB18)).